Reading from the N-terminus, the 247-residue chain is Large ribosomal subunit protein uL30 (247 aa).

It belongs to the universal ribosomal protein uL30 family.

This Sus scrofa (Pig) protein is Large ribosomal subunit protein uL30 (RPL7L1).